Here is a 1183-residue protein sequence, read N- to C-terminus: Protein deacetylase HDAC6 (1183 aa).

Positions 1-61 (MTSTGQDSST…KGKMKKLSQP (61 aa)) are disordered. Over residues 18 to 29 (NPQSPLQDSSAT) the composition is skewed to polar residues. Position 21 is a phosphoserine (S21). At R32 the chain carries Omega-N-methylarginine. Positions 66–75 (LIVGLQGLDL) match the Nuclear export signal motif. Histone deacetylase regions lie at residues 86–434 (GLVF…TLLG) and 512–830 (GLVY…SLLG). The active-site 1 is H215. H641 acts as the 2 in catalysis. The disordered stretch occupies residues 972–1042 (ATENSANQTT…EAQEVQESEE (71 aa)). A compositionally biased stretch (low complexity) spans 980–996 (TTSGEEASGETESFGTS). Phosphothreonine occurs at positions 990, 995, and 1005. Over residues 997-1008 (PSSNASKQTTGA) the composition is skewed to polar residues. S1009 bears the Phosphoserine mark. The span at 1021–1035 (ELGLSSTLELSSEAQ) shows a compositional bias: low complexity. The UBP-type zinc finger occupies 1079-1177 (SWCPHLMAVC…NAAHQNKFGE (99 aa)). Residues C1081, H1083, C1101, C1104, C1113, C1116, and C1121 each contribute to the Zn(2+) site. Residues 1122–1124 (SRY) are ubiquitin binding. 5 residues coordinate Zn(2+): H1128, H1132, H1138, C1151, and C1154. The interval 1150 to 1157 (WCYLCQAY) is ubiquitin binding.

The protein belongs to the histone deacetylase family. HD type 2 subfamily. In terms of assembly, forms a trimeric complex in the nucleus consisting of BANP, HDAC6 and KHDRBS1/SAM68; HDAC6 keeps KHDRBS1 in a deacetylated state which inhibits the inclusion of CD44 alternate exons. The complex is disrupted by MAPK1/MAPK3-mediated phosphorylation of BANP which results in BANP export to the cytoplasm. This facilitates acetylation of KHDRBS1 and CD44 variant exon inclusion. Interacts with SIRT2 (via both phosphorylated, unphosphorylated, active or inactive forms); the interaction is necessary for the complex to interact with alpha-tubulin. Under proteasome impairment conditions, interacts with UBD via its histone deacetylase 1 and UBP-type zinc-finger regions. Interacts with BBIP1, CBFA2T3, CYLD, DDIT3/CHOP, ZMYND15, F-actin and HDAC11. Interacts with RIPOR2; this interaction occurs during early myogenic differentiation and prevents HDAC6 to deacetylate tubulin. Interacts with AURKA; AURKA-mediated phosphorylation of HDAC6 promotes deacetylation of alpha-tubulin. Interacts with DYSF; this interaction occurs during early myogenic differentiation. Interacts with TPPP; inhibiting the tubulin deacetylase activity of HDAC6. Interacts with DYNLL1. Interacts with ATP13A2; the interaction results in recruitment of HDAC6 to lysosomes to promote CTTN deacetylation. Interacts with CCDC141 (via the N-terminal region); inhibiting the deacetylase activity of HDAC6. Interacts with IPO7; the interaction facilitates HDAC6 nuclear translocation in dental papilla cells. It depends on Zn(2+) as a cofactor. Phosphorylated by AURKA; phosphorylation increases HDAC6-mediated deacetylation of alpha-tubulin and subsequent disassembly of cilia. Post-translationally, ubiquitinated. Its polyubiquitination however does not lead to its degradation. In terms of processing, sumoylated in vitro.

The protein resides in the cytoplasm. Its subcellular location is the cytoskeleton. It localises to the nucleus. It is found in the perikaryon. The protein localises to the cell projection. The protein resides in the dendrite. Its subcellular location is the axon. It localises to the cilium. It is found in the microtubule organizing center. The protein localises to the centrosome. The protein resides in the cilium basal body. It catalyses the reaction N(6)-acetyl-L-lysyl-[protein] + H2O = L-lysyl-[protein] + acetate. It carries out the reaction N(6)-acetyl-L-lysyl-[alpha-tubulin] + H2O = L-lysyl-[alpha-tubulin] + acetate. It functions in the pathway protein modification; protein ubiquitination. Its function is as follows. Deacetylates a wide range of non-histone substrates. Plays a central role in microtubule-dependent cell motility by mediating deacetylation of tubulin. Required for cilia disassembly via deacetylation of alpha-tubulin. Alpha-tubulin deacetylation results in destabilization of dynamic microtubules. Promotes deacetylation of CTTN, leading to actin polymerization, promotion of autophagosome-lysosome fusion and completion of autophagy. Deacetylates SQSTM1. Deacetylates peroxiredoxins PRDX1 and PRDX2, decreasing their reducing activity. Deacetylates antiviral protein RIGI in the presence of viral mRNAs which is required for viral RNA detection by RIGI. Sequentially deacetylates and polyubiquitinates DNA mismatch repair protein MSH2 which leads to MSH2 degradation, reducing cellular sensitivity to DNA-damaging agents and decreasing cellular DNA mismatch repair activities. Deacetylates DNA mismatch repair protein MLH1 which prevents recruitment of the MutL alpha complex (formed by the MLH1-PMS2 heterodimer) to the MutS alpha complex (formed by the MSH2-MSH6 heterodimer), leading to tolerance of DNA damage. Deacetylates RHOT1/MIRO1 which blocks mitochondrial transport and mediates axon growth inhibition. Deacetylates transcription factor SP1 which leads to increased expression of ENG, positively regulating angiogenesis. Deacetylates KHDRBS1/SAM68 which regulates alternative splicing by inhibiting the inclusion of CD44 alternate exons. Promotes odontoblast differentiation following IPO7-mediated nuclear import and subsequent repression of RUNX2 expression. In addition to its protein deacetylase activity, plays a key role in the degradation of misfolded proteins: when misfolded proteins are too abundant to be degraded by the chaperone refolding system and the ubiquitin-proteasome, mediates the transport of misfolded proteins to a cytoplasmic juxtanuclear structure called aggresome. Probably acts as an adapter that recognizes polyubiquitinated misfolded proteins and targets them to the aggresome, facilitating their clearance by autophagy. This Rattus norvegicus (Rat) protein is Protein deacetylase HDAC6.